Reading from the N-terminus, the 260-residue chain is Circadian clock-controlled protein daywake (260 aa).

The first 25 residues, 1-25, serve as a signal peptide directing secretion; it reads MQLTGASMFLVWVGLLSWVSCRVDA.

It belongs to the TO family. As to expression, epidermis of newly eclosed adults.

Functionally, component of the circadian clock or downstream effector of clock function. Required for suppressing daytime sleep (siesta) under ambient environmental temperatures. Part of a heat avoidance mechanism that modulates daytime sleep behavior under different environmental temperatures to minimize the risk of heat exposure. Under cooler ambient temperatures, suppresses daytime sleep (siesta) and thus allows for longer periods of daytime activity. The polypeptide is Circadian clock-controlled protein daywake (Drosophila melanogaster (Fruit fly)).